A 123-amino-acid chain; its full sequence is Small ribosomal subunit protein uS12 (123 aa).

3-methylthioaspartic acid is present on Asp89.

This sequence belongs to the universal ribosomal protein uS12 family. In terms of assembly, part of the 30S ribosomal subunit. Contacts proteins S8 and S17. May interact with IF1 in the 30S initiation complex.

In terms of biological role, with S4 and S5 plays an important role in translational accuracy. Its function is as follows. Interacts with and stabilizes bases of the 16S rRNA that are involved in tRNA selection in the A site and with the mRNA backbone. Located at the interface of the 30S and 50S subunits, it traverses the body of the 30S subunit contacting proteins on the other side and probably holding the rRNA structure together. The combined cluster of proteins S8, S12 and S17 appears to hold together the shoulder and platform of the 30S subunit. This is Small ribosomal subunit protein uS12 from Bifidobacterium animalis subsp. lactis (strain AD011).